Here is a 111-residue protein sequence, read N- to C-terminus: Large ribosomal subunit protein P2 (111 aa).

A compositionally biased stretch (low complexity) spans 63–84; that stretch reads ASMPTGGAPAAAAGGAATAPAA. The disordered stretch occupies residues 63 to 111; sequence ASMPTGGAPAAAAGGAATAPAAEAKEAKKEEKKEESEEEDEDMGFGLFD. The segment covering 85–97 has biased composition (basic and acidic residues); that stretch reads EAKEAKKEEKKEE. Serine 98 carries the phosphoserine modification.

Part of the ribosomal stalk of the large ribosomal subunit; P1 and P2 exist as dimers which assemble on the P0 scaffold.

Functionally, plays an important role in the elongation step of protein synthesis. The sequence is that of Large ribosomal subunit protein P2 from Artemia salina (Brine shrimp).